A 438-amino-acid chain; its full sequence is Transposon Ty2-LR2 Gag polyprotein (438 aa).

Composition is skewed to polar residues over residues M1 to H11, A19 to N39, and K49 to T60. Disordered stretches follow at residues M1–H88, K364–H397, and V418–I438. Residues E295–H397 are RNA-binding. Residues T369–R381 are compositionally biased toward low complexity.

As to quaternary structure, homotrimer.

Its subcellular location is the cytoplasm. Its function is as follows. Capsid protein (CA) is the structural component of the virus-like particle (VLP), forming the shell that encapsulates the retrotransposons dimeric RNA genome. The particles are assembled from trimer-clustered units and there are holes in the capsid shells that allow for the diffusion of macromolecules. CA also has nucleocapsid-like chaperone activity, promoting primer tRNA(i)-Met annealing to the multipartite primer-binding site (PBS), dimerization of Ty2 RNA and initiation of reverse transcription. The chain is Transposon Ty2-LR2 Gag polyprotein (TY2A-LR2) from Saccharomyces cerevisiae (strain ATCC 204508 / S288c) (Baker's yeast).